A 326-amino-acid chain; its full sequence is MKPKLNDVAKLAGVSATTVSRVINNHGYLSSQTKEKVFAAMRELHYQPNNMARSLQGKNTRLIGVIFSDISNPFFGELVSRIEKILFAKNYKVILCNSADDPQKERDYLQMLMANQVDGIIAGAHNLGIEEYQQYGLPIISFDRYLSDNIPIVSSDNYQGGWLATQTLHQAGATNVAIFTGKSHAGSPTNGRREGYEAYLTAQQLTPHVHELPFELTPALKMMEIKTIMTQHQYDGIFCSDDLAALLVLNVAQQLSLTVPEQLRVVGYDGTALIRDYHSELTTVEQPLADISTLLVSLLLQRIEDANCTLESKYTLPVKLIKGFTA.

Residues 1–57 form the HTH lacI-type domain; sequence MKPKLNDVAKLAGVSATTVSRVINNHGYLSSQTKEKVFAAMRELHYQPNNMARSLQG. A DNA-binding region (H-T-H motif) is located at residues 5-24; sequence LNDVAKLAGVSATTVSRVIN.

Negative regulator of scrB expression. In Pediococcus pentosaceus, this protein is Sucrose operon repressor (scrR).